The primary structure comprises 125 residues: uncharacterized protein (125 aa).

Disordered stretches follow at residues 1 to 27 and 76 to 125; these read MNKT…GSSS and NKNN…RFKK. Low complexity predominate over residues 18 to 27; sequence GMNSTTGSSS.

This is an uncharacterized protein from Dictyostelium discoideum (Social amoeba).